The primary structure comprises 947 residues: Protein translocase subunit SecA 1 (947 aa).

ATP contacts are provided by residues Gln83, 101–105 (GEGKT), and Asp490. The disordered stretch occupies residues 860–947 (AKAQEQTGQG…KTSKPTRRRG (88 aa)). Residues 925-934 (TRRERREAAR) are compositionally biased toward basic and acidic residues. Residues 935 to 947 (KQAKTSKPTRRRG) are compositionally biased toward basic residues.

It belongs to the SecA family. As to quaternary structure, monomer and homodimer. Part of the essential Sec protein translocation apparatus which comprises SecA, SecYEG and auxiliary proteins SecDF. Other proteins may also be involved.

It localises to the cell membrane. The protein localises to the cytoplasm. The enzyme catalyses ATP + H2O + cellular proteinSide 1 = ADP + phosphate + cellular proteinSide 2.. In terms of biological role, part of the Sec protein translocase complex. Interacts with the SecYEG preprotein conducting channel. Has a central role in coupling the hydrolysis of ATP to the transfer of proteins into and across the cell membrane, serving as an ATP-driven molecular motor driving the stepwise translocation of polypeptide chains across the membrane. The chain is Protein translocase subunit SecA 1 from Mycobacterium sp. (strain JLS).